Here is a 185-residue protein sequence, read N- to C-terminus: Ribosome-recycling factor (185 aa).

It belongs to the RRF family.

The protein resides in the cytoplasm. Functionally, responsible for the release of ribosomes from messenger RNA at the termination of protein biosynthesis. May increase the efficiency of translation by recycling ribosomes from one round of translation to another. The polypeptide is Ribosome-recycling factor (Thermomicrobium roseum (strain ATCC 27502 / DSM 5159 / P-2)).